Reading from the N-terminus, the 1225-residue chain is MSSPLQRAVGDTKRALSASSSSSASLPFDDRDSNHTSEGNGDSLLADEDTDFEDSLNRNVKKRAAKRPPKTTPVAKHPKKGSRVVHRHSRKQSEPPANDLFNAVKAAKSDMQSLVDEWLDSYKQDQDAGFLELVNFFIQSCGCKGIVTPEMFKKMSNSEIIQHLTEQFNEDSGDYPLIAPGPSWKKFQGSFCEFVRTLVCQCQYSLLYDGFPMDDLISLLTGLSDSQVRAFRHTSTLAAMKLMTSLVKVALQLSVHQDNNQRQYEAERNKGPGQRAPERLESLLEKRKELQEHQEEIEGMMNALFRGVFVHRYRDVLPEIRAICIEEIGCWMQSYSTSFLTDSYLKYIGWTLHDKHREVRLKCVKALKGLYGNRDLTTRLELFTSRFKDRMVSMVMDREYDVAVEAVRLLILILKNMEGVLTDADCESVYPVVYASHRGLASAAGEFLYWKLFYPECEIRMMGGREQRQSPGAQRTFFQLLLSFFVESELHDHAAYLVDSLWDCAGARLKDWEGLTSLLLEKDQNLGDVQESTLIEILVSSARQASEGHPPVGRVTGRKGLTSKERKTQADDRVKLTEHLIPLLPQLLAKFSADAEKVTPLLQLLSCFDLHIYCTGRLEKHLELFLQQLQEVVVKHAEPAVLEAGAHALYLLCNPEFTFFSRADFARSQLVDLLTDRFQQELEELLQSSFLDEDEVYNLAATLKRLSAFYNTHDLTRWELYEPCCQLLQKAVDTGEVPHQVILPALTLVYFSILWTLTHISKSDASQKQLSSLRDRMVAFCELCQSCLSDVDTEIQEQAFVLLSDLLLIFSPQMIVGGRDFLRPLVFFPEATLQSELASFLMDHVFIQPGDLGSGDSQEDHLQIERLHQRRRLLAGFCKLLLYGVLEMDAASDVFKHYNKFYNDYGDIIKETLTRARQIDRSHCSRILLLSLKQLYTELLQEHGPQGLNELPAFIEMRDLARRFALSFGPQQLQNRDLVVMLHKEGIQFSLSELPPAGSSNQPPNLAFLELLSEFSPRLFHQDKQLLLSYLEKCLQHVSQAPGHPWGPVTTYCHSLSPVENTAETSPQVLPSSKRRRVEGPAKPNREDVSSSQEESLQLNSIPPTPTLTSTAVKSRQPLWGLKEMEEEDGSELDFAQGQPVAGTERSRFLGPQYFQTPHNPSGPGLGNQLMRLSLMEEDEEEELEIQDESNEERQDTDMQASSYSSTSERGLDLLDSTELDIEDF.

The tract at residues 1–97 (MSSPLQRAVG…HSRKQSEPPA (97 aa)) is disordered. The span at 15–26 (ALSASSSSSASL) shows a compositional bias: low complexity. A compositionally biased stretch (acidic residues) spans 45–54 (LADEDTDFED). Composition is skewed to basic residues over residues 59–69 (NVKKRAAKRPP) and 76–90 (KHPK…RHSR). The region spanning 309–394 (FVHRYRDVLP…SRFKDRMVSM (86 aa)) is the SCD domain. Disordered stretches follow at residues 546–567 (SEGH…KERK), 1063–1113 (AETS…STAV), and 1177–1225 (EEDE…IEDF). Basic and acidic residues predominate over residues 1078 to 1089 (VEGPAKPNREDV). The segment covering 1090–1099 (SSSQEESLQL) has biased composition (low complexity). The span at 1177 to 1191 (EEDEEEELEIQDESN) shows a compositional bias: acidic residues. Polar residues predominate over residues 1198–1209 (DMQASSYSSTSE). At Ser-1203 the chain carries Phosphoserine. A compositionally biased stretch (acidic residues) spans 1216 to 1225 (DSTELDIEDF).

This sequence belongs to the SCC3 family. In terms of assembly, component of the meiosis-specific cohesin complex, which also contains the SMC1 (SMC1A or SMC1B) and SMC3 heterodimer. Such complex likely contains RAD21, or the meiosis-specific related protein REC8. Interacts with CCDC79/TERB1; recruiting cohesin to telomeres to develop structural rigidity. In terms of processing, phosphorylated. Testis specific.

It localises to the nucleus. The protein resides in the chromosome. The protein localises to the centromere. Functionally, meiosis specific component of cohesin complex. The cohesin complex is required for the cohesion of sister chromatids after DNA replication. The cohesin complex apparently forms a large proteinaceous ring within which sister chromatids can be trapped. At anaphase, the complex is cleaved and dissociates from chromatin, allowing sister chromatids to segregate. The meiosis-specific cohesin complex probably replaces mitosis specific cohesin complex when it dissociates from chromatin during prophase I. This is Cohesin subunit SA-3 (STAG3) from Homo sapiens (Human).